The chain runs to 277 residues: Protein PTST, chloroplastic (277 aa).

The N-terminal 44 residues, M1–V44, are a transit peptide targeting the chloroplast. Positions D95–N152 form a coiled coil.

As to quaternary structure, interacts with GBSS1.

The protein localises to the plastid. The protein resides in the chloroplast stroma. In terms of biological role, involved in targeting GBSS1 to the starch granule. Was originally thought to be a carbohydrate-binding scaffold protein, but it has been shown that it is mainly found as a soluble protein and that interaction with GBSS1 is a pre-requisite for subsequent starch granule binding. Dissociation from starch as a function of pH, Mg(2+) concentration or redox state is not observed. Interacts primarily with amylopectin and is required for amylose synthesis. The polypeptide is Protein PTST, chloroplastic (Arabidopsis thaliana (Mouse-ear cress)).